The primary structure comprises 129 residues: Putative membrane protein insertion efficiency factor (129 aa).

The protein belongs to the UPF0161 family.

The protein resides in the cell inner membrane. Its function is as follows. Could be involved in insertion of integral membrane proteins into the membrane. This chain is Putative membrane protein insertion efficiency factor, found in Rhodopseudomonas palustris (strain ATCC BAA-98 / CGA009).